Here is a 1453-residue protein sequence, read N- to C-terminus: MCVCACARVCVYVCTRHHPPLDVFPADDVITPPCSSWPLRGVMSRPACQCLRRCEVMGEVNGPVCSPEIVLASAGKTLSENGQENSPHNSDSGHETSSPDSPLTPIEEGAVSPGDDSFFVVWIKFMVLPRKLCINKDVEKLFSAAEKTGNDGEVLCPSDECDTFRIRIIAPGAEPFDLQVNSNEMVQELHQVLLEREATCHRTCFSLQLNGVSLDHFTELKNISGLTDGSVLRVVEQPYTTREARIHVRHIRDLIRSLDMSDAVNGTDGASMSYLASMTLGDRKKNADKTLECSPPDYVLPGYKERPLIPLLPVMKEPVLALKSLAISPFNPPPGHRKLKGDVLYLTFDTREGRRYHITCCTKGFYVNATTEAGFRPTPSPSHRTVHHSLLDLLSSISISFKRAMALILKRRSEKHIFERLPTPYQVNSWIAPVFEQIEDGIRAEDCTQPHKIGLEDHIPGQIRDWNEELQTTHELPRETLGERLIRERAIFKIHSDFVSAAIKVNVSMAVVDGNVVAINPADEPRTHMYIWNNIFFSLGFDVKDHYKDLGGDAAAHAATSNDLQGVRAYAQLDNPKLFTLGMVIVDYKGFRVTAQSIIPGILEREQEQSVIYGSVDFGKTVVSSEEYHDLLSKPAEQLKILPHEVHSGKDDGKIIKLCSSFETKGIVGNDSRHYILDLLRTFPPDVNYLEDAEVTDICKANGYPRTFPHKLASLRQELIDAFVEYRYLMFIRIAAYHVQQTKLGLLETDYNDDKKETTKEDTVLKVTGFSEDAIMSQIKREITADIKIDEMPLLETEAAKKIMEEVIDSDHKKVDSLDKEISETIMAKAAKAVGSIRMDAFDVRFNPDCYCSTVRHAESEDITKQRRLVAEAAEFLIVQQLPNFVRDCLQRTIMLLDGASLIDSLHSRGINIRYLGKLTKYIQNVGQLSYVKVICITELLCRCAKHIFRGYLQPVSSAHTAAAVSHFLNCLLSSSTEPLTPSNEEVSMPINSVKKSRSSKRRKQISSGGKENDDWAQMSSHKLWERVKSDADFYYAFTIDEENIDAYLSTVGIQKTSFLRRFVQIVGIQMLLRDYNLESGKKSQLFVEDDIQSLYCQAKHVDPKAVDAHSLFLSGQTKVQQGQLRAGFDLVLESLNLMNSVYGAMHSDMAQCMRLLARLSYILGDPSEALSQQHKATLMSERCNGLDSANTIIEYLNLAHFSFANLHIAAALKLLYRARYLLLLIHGENHPFMAEIDGNIGVILYAVQEFDDALKFLQNALKLHQIYLEPQALKTALIYHLLARTYSCRGDFRTALQMEKETFTIYSKTFGIDHEKTKESSDCLKHLTQQAVTFQKRINEANRQGSNNIGQLLPVEIHRPSLHSVLEVLNILNGIIFIQLKGISTSSDIGEENYELGNNNNNNNKRKKKAVEDLAVKKNGNNDDTTVISSRPQVNNMSGSSTVQVMQEVALD.

The span at L78–S101 shows a compositional bias: polar residues. The segment at L78 to A110 is disordered. The 252-residue stretch at E439 to L690 folds into the Clu domain. The interval P979–D1015 is disordered. A compositionally biased stretch (basic residues) spans K995–Q1005. TPR repeat units follow at residues A1235 to Y1268 and A1277 to T1310.

It belongs to the CLU family.

The protein resides in the cytoplasm. In terms of biological role, mRNA-binding protein involved in proper cytoplasmic distribution of mitochondria. This Brugia malayi (Filarial nematode worm) protein is Clustered mitochondria protein homolog.